Consider the following 186-residue polypeptide: Proline-rich protein 3 (186 aa).

The disordered stretch occupies residues 1 to 97 (MPKRKKQNQP…LGPRSSPYGR (97 aa)). Composition is skewed to pro residues over residues 33–44 (MGPPSLLGPPPM) and 67–79 (MIPPLLSLPPPPR). The C3H1-type zinc-finger motif lies at 153-181 (KSDRPVCRHFSKKGHCRYEDHCAFYHPGV).

This Rattus norvegicus (Rat) protein is Proline-rich protein 3 (Prr3).